The chain runs to 424 residues: 3-isopropylmalate dehydratase large subunit (424 aa).

Residues Cys-299, Cys-359, and Cys-362 each contribute to the [4Fe-4S] cluster site.

It belongs to the aconitase/IPM isomerase family. LeuC type 2 subfamily. In terms of assembly, heterodimer of LeuC and LeuD. Requires [4Fe-4S] cluster as cofactor.

It carries out the reaction (2R,3S)-3-isopropylmalate = (2S)-2-isopropylmalate. It participates in amino-acid biosynthesis; L-leucine biosynthesis; L-leucine from 3-methyl-2-oxobutanoate: step 2/4. In terms of biological role, catalyzes the isomerization between 2-isopropylmalate and 3-isopropylmalate, via the formation of 2-isopropylmaleate. The polypeptide is 3-isopropylmalate dehydratase large subunit (Hydrogenobaculum sp. (strain Y04AAS1)).